The chain runs to 211 residues: Small ribosomal subunit protein uS5 (211 aa).

An S5 DRBM domain is found at 51–114; the sequence is LKHEVLDVSL…ANAKLNITPV (64 aa).

This sequence belongs to the universal ribosomal protein uS5 family. Part of the 30S ribosomal subunit. Contacts protein S4.

With S4 and S12 plays an important role in translational accuracy. This is Small ribosomal subunit protein uS5 from Ignicoccus hospitalis (strain KIN4/I / DSM 18386 / JCM 14125).